The chain runs to 202 residues: 3-isopropylmalate dehydratase small subunit (202 aa).

It belongs to the LeuD family. LeuD type 1 subfamily. Heterodimer of LeuC and LeuD.

The enzyme catalyses (2R,3S)-3-isopropylmalate = (2S)-2-isopropylmalate. Its pathway is amino-acid biosynthesis; L-leucine biosynthesis; L-leucine from 3-methyl-2-oxobutanoate: step 2/4. Catalyzes the isomerization between 2-isopropylmalate and 3-isopropylmalate, via the formation of 2-isopropylmaleate. This chain is 3-isopropylmalate dehydratase small subunit, found in Blochmanniella pennsylvanica (strain BPEN).